Here is a 157-residue protein sequence, read N- to C-terminus: Homeobox protein DBX2 (157 aa).

Positions 9 to 68 (GILRRAVFSEDQRKALEKMFQKQKYISKTDRKKLAINLGLKESQVKIWFQNRRMKWRNSK) form a DNA-binding region, homeobox. Positions 105–157 (SQEQTSPRWKEKSPGNSERLTSTQPPPRANSSQSPLYLYPDHDTANKAVTSSD) are disordered. The segment covering 118 to 139 (PGNSERLTSTQPPPRANSSQSP) has biased composition (polar residues).

It belongs to the H2.0 homeobox family. In terms of tissue distribution, localized to the central nervous system during embryogenesis. It is found restricted to the rostro-caudal and dorso-ventral regions of the hindbrain. In the ventricular zone of the spinal cord, it localizes to the dorsal part of the basal plate. In the adult, it is detected in ovary.

Its subcellular location is the nucleus. Functionally, appears to perform a very early function in establishing the identity of a subset of cells that originate in the region of the ventricular zone in the developing spinal cord and in the hindbrain. This chain is Homeobox protein DBX2 (DBX2), found in Gallus gallus (Chicken).